A 320-amino-acid polypeptide reads, in one-letter code: Malate dehydrogenase (320 aa).

NAD(+) is bound by residues 10–15 and Asp34; that span reads GAGQIG. Positions 83 and 89 each coordinate substrate. Residues Asn96 and 119-121 contribute to the NAD(+) site; that span reads ITN. Substrate contacts are provided by Asn121 and Arg152. The active-site Proton acceptor is His176.

Belongs to the LDH/MDH superfamily. MDH type 3 family.

It carries out the reaction (S)-malate + NAD(+) = oxaloacetate + NADH + H(+). Functionally, catalyzes the reversible oxidation of malate to oxaloacetate. The polypeptide is Malate dehydrogenase (Roseobacter denitrificans (strain ATCC 33942 / OCh 114) (Erythrobacter sp. (strain OCh 114))).